The chain runs to 220 residues: Charged multivesicular body protein 4b (220 aa).

2 disordered regions span residues 1–22 and 180–220; these read MSLF…SPQE and EIGD…WAAN. Coiled coils occupy residues 21-88 and 123-181; these read QEAI…STIE and IDKV…LLEI.

The protein belongs to the SNF7 family. As to quaternary structure, probable core component of the endosomal sorting required for transport complex III (ESCRT-III). ESCRT-III components are thought to multimerize to form a flat lattice on the perimeter membrane of the endosome.

Its subcellular location is the cytoplasm. The protein localises to the cytosol. The protein resides in the late endosome membrane. It localises to the midbody. Probable core component of the endosomal sorting required for transport complex III (ESCRT-III) which is involved in multivesicular bodies (MVBs) formation and sorting of endosomal cargo proteins into MVBs. MVBs contain intraluminal vesicles (ILVs) that are generated by invagination and scission from the limiting membrane of the endosome and mostly are delivered to lysosomes enabling degradation of membrane proteins, such as stimulated growth factor receptors, lysosomal enzymes and lipids. This Danio rerio (Zebrafish) protein is Charged multivesicular body protein 4b (chmp4b).